The chain runs to 344 residues: Methionine import ATP-binding protein MetN (344 aa).

Residues 2–241 (IELQGLSQRF…PQHEVTRAMI (240 aa)) enclose the ABC transporter domain. 38–45 (GRSGAGKS) contacts ATP.

This sequence belongs to the ABC transporter superfamily. Methionine importer (TC 3.A.1.24) family. As to quaternary structure, the complex is composed of two ATP-binding proteins (MetN), two transmembrane proteins (MetI) and a solute-binding protein (MetQ).

Its subcellular location is the cell inner membrane. It carries out the reaction L-methionine(out) + ATP + H2O = L-methionine(in) + ADP + phosphate + H(+). The enzyme catalyses D-methionine(out) + ATP + H2O = D-methionine(in) + ADP + phosphate + H(+). In terms of biological role, part of the ABC transporter complex MetNIQ involved in methionine import. Responsible for energy coupling to the transport system. The polypeptide is Methionine import ATP-binding protein MetN (Cupriavidus pinatubonensis (strain JMP 134 / LMG 1197) (Cupriavidus necator (strain JMP 134))).